The chain runs to 143 residues: Lysozyme C (143 aa).

Positions 1–15 are cleaved as a signal peptide; sequence MRCLLLLLLVPVPGA. Positions 16–143 constitute a C-type lysozyme domain; it reads KVFERCEWAR…LSSYVAGCGV (128 aa). 4 cysteine pairs are disulfide-bonded: cysteine 21–cysteine 141, cysteine 45–cysteine 129, cysteine 79–cysteine 94, and cysteine 90–cysteine 108. Residues glutamate 50 and aspartate 67 contribute to the active site.

This sequence belongs to the glycosyl hydrolase 22 family. In terms of assembly, monomer.

It localises to the secreted. The enzyme catalyses Hydrolysis of (1-&gt;4)-beta-linkages between N-acetylmuramic acid and N-acetyl-D-glucosamine residues in a peptidoglycan and between N-acetyl-D-glucosamine residues in chitodextrins.. In terms of biological role, lysozymes have primarily a bacteriolytic function; those in tissues and body fluids are associated with the monocyte-macrophage system and enhance the activity of immunoagents. This Scophthalmus maximus (Turbot) protein is Lysozyme C (lys).